A 325-amino-acid polypeptide reads, in one-letter code: Phospholipid phosphatase-related protein type 1 (325 aa).

3 helical membrane-spanning segments follow: residues 11 to 31 (YSIIPCFIFVELVIMAGTVLL), 67 to 87 (FISPLVLYCVLAATPTAIIFI), and 127 to 147 (FIGVFAFGLFATDIFVNAGQV). N-linked (GlcNAc...) asparagine glycosylation occurs at Asn-163. A run of 3 helical transmembrane segments spans residues 201-218 (AALSIYSALYATMYITST), 230-247 (VLCLGTLCCAFLTGLNRV), and 257-277 (VIGGFILGTAIALFLGLCVVH). The N-linked (GlcNAc...) asparagine glycan is linked to Asn-316.

The protein belongs to the PA-phosphatase related phosphoesterase family.

It localises to the cell membrane. It is found in the cell projection. Its subcellular location is the neuron projection. May play a role in neurite outgrowth and neurogenesis. In Xenopus tropicalis (Western clawed frog), this protein is Phospholipid phosphatase-related protein type 1.